The following is a 253-amino-acid chain: Ubiquinone/menaquinone biosynthesis C-methyltransferase UbiE (253 aa).

S-adenosyl-L-methionine-binding positions include threonine 76, aspartate 97, and 125–126 (NA).

Belongs to the class I-like SAM-binding methyltransferase superfamily. MenG/UbiE family.

It catalyses the reaction a 2-demethylmenaquinol + S-adenosyl-L-methionine = a menaquinol + S-adenosyl-L-homocysteine + H(+). The catalysed reaction is a 2-methoxy-6-(all-trans-polyprenyl)benzene-1,4-diol + S-adenosyl-L-methionine = a 5-methoxy-2-methyl-3-(all-trans-polyprenyl)benzene-1,4-diol + S-adenosyl-L-homocysteine + H(+). It participates in quinol/quinone metabolism; menaquinone biosynthesis; menaquinol from 1,4-dihydroxy-2-naphthoate: step 2/2. Its pathway is cofactor biosynthesis; ubiquinone biosynthesis. Its function is as follows. Methyltransferase required for the conversion of demethylmenaquinol (DMKH2) to menaquinol (MKH2) and the conversion of 2-polyprenyl-6-methoxy-1,4-benzoquinol (DDMQH2) to 2-polyprenyl-3-methyl-6-methoxy-1,4-benzoquinol (DMQH2). This is Ubiquinone/menaquinone biosynthesis C-methyltransferase UbiE from Nitrobacter hamburgensis (strain DSM 10229 / NCIMB 13809 / X14).